Consider the following 299-residue polypeptide: MATYPESLLILNGKSAGNELLREAITELRDNGVIIHVRVTWEKGDAARYIEEACQLGVETVIAGGGDGTINEIATALIERDAAERPAMGILPLGTANDFATSAGIPESLEKALQLAIVGKAAAVDIAQVNDKTCFINMATGGFGTRITSETPEKLKAALGGVSYLIHGLMRMDMLKPDRCEINGENFHWQGDALVIGIGNGRQAGGGQQLCPDALINDGLLQLRIFTSDGLLPALFTTLTNPEESPNILDGQSEWFEIIAPHGMTFNLDGEPLSGEHFRISLLPRALNCRLPPDCPLLR.

Residues Ala-2–Thr-133 form the DAGKc domain. ATP-binding positions include Thr-40, Gly-66 to Glu-72, and Thr-95. Residues Leu-215, Asp-218, and Leu-220 each coordinate Mg(2+). The active-site Proton acceptor is Glu-271.

It belongs to the diacylglycerol/lipid kinase family. YegS lipid kinase subfamily. Mg(2+) serves as cofactor. Requires Ca(2+) as cofactor.

The protein resides in the cytoplasm. Probably phosphorylates lipids; the in vivo substrate is unknown. The protein is Probable lipid kinase YegS-like of Enterobacter sp. (strain 638).